The primary structure comprises 581 residues: Proline--tRNA ligase (581 aa).

It belongs to the class-II aminoacyl-tRNA synthetase family. ProS type 1 subfamily. As to quaternary structure, homodimer.

It localises to the cytoplasm. It carries out the reaction tRNA(Pro) + L-proline + ATP = L-prolyl-tRNA(Pro) + AMP + diphosphate. Catalyzes the attachment of proline to tRNA(Pro) in a two-step reaction: proline is first activated by ATP to form Pro-AMP and then transferred to the acceptor end of tRNA(Pro). As ProRS can inadvertently accommodate and process non-cognate amino acids such as alanine and cysteine, to avoid such errors it has two additional distinct editing activities against alanine. One activity is designated as 'pretransfer' editing and involves the tRNA(Pro)-independent hydrolysis of activated Ala-AMP. The other activity is designated 'posttransfer' editing and involves deacylation of mischarged Ala-tRNA(Pro). The misacylated Cys-tRNA(Pro) is not edited by ProRS. The sequence is that of Proline--tRNA ligase from Rhodococcus opacus (strain B4).